Reading from the N-terminus, the 337-residue chain is Ketol-acid reductoisomerase (NADP(+)) (337 aa).

Residues 3 to 183 (VEMFYDADAD…GGARAGVIKT (181 aa)) enclose the KARI N-terminal Rossmann domain. Residues 26 to 29 (YGSQ), Lys-49, Ser-52, Ser-54, and 84 to 87 (DTAQ) contribute to the NADP(+) site. Residue His-109 is part of the active site. NADP(+) is bound at residue Gly-135. One can recognise a KARI C-terminal knotted domain in the interval 184–329 (TFKEETETDL…KKLRDLMSWV (146 aa)). Residues Asp-192, Glu-196, Glu-228, and Glu-232 each contribute to the Mg(2+) site. Ser-253 is a substrate binding site.

It belongs to the ketol-acid reductoisomerase family. Requires Mg(2+) as cofactor.

It carries out the reaction (2R)-2,3-dihydroxy-3-methylbutanoate + NADP(+) = (2S)-2-acetolactate + NADPH + H(+). It catalyses the reaction (2R,3R)-2,3-dihydroxy-3-methylpentanoate + NADP(+) = (S)-2-ethyl-2-hydroxy-3-oxobutanoate + NADPH + H(+). It participates in amino-acid biosynthesis; L-isoleucine biosynthesis; L-isoleucine from 2-oxobutanoate: step 2/4. It functions in the pathway amino-acid biosynthesis; L-valine biosynthesis; L-valine from pyruvate: step 2/4. Involved in the biosynthesis of branched-chain amino acids (BCAA). Catalyzes an alkyl-migration followed by a ketol-acid reduction of (S)-2-acetolactate (S2AL) to yield (R)-2,3-dihydroxy-isovalerate. In the isomerase reaction, S2AL is rearranged via a Mg-dependent methyl migration to produce 3-hydroxy-3-methyl-2-ketobutyrate (HMKB). In the reductase reaction, this 2-ketoacid undergoes a metal-dependent reduction by NADPH to yield (R)-2,3-dihydroxy-isovalerate. This is Ketol-acid reductoisomerase (NADP(+)) from Mycolicibacterium vanbaalenii (strain DSM 7251 / JCM 13017 / BCRC 16820 / KCTC 9966 / NRRL B-24157 / PYR-1) (Mycobacterium vanbaalenii).